A 71-amino-acid chain; its full sequence is Small ribosomal subunit protein bS21 (71 aa).

Over residues 48 to 59 (KAAAAVKRHAKK) the composition is skewed to basic residues. The segment at 48 to 71 (KAAAAVKRHAKKVQRENRKFQRLY) is disordered. Positions 60–71 (VQRENRKFQRLY) are enriched in basic and acidic residues.

The protein belongs to the bacterial ribosomal protein bS21 family.

The polypeptide is Small ribosomal subunit protein bS21 (Teredinibacter turnerae (strain ATCC 39867 / T7901)).